We begin with the raw amino-acid sequence, 192 residues long: Probable GTP-binding protein EngB (192 aa).

An EngB-type G domain is found at 22–192 (GRPEIVFVGR…LLERLDLFSQ (171 aa)). Residues 30 to 37 (GRSNVGKS), 57 to 61 (GKTRL), 75 to 78 (DLPG), 142 to 145 (TKWD), and 172 to 174 (YSS) each bind GTP. Mg(2+) is bound by residues S37 and T59.

The protein belongs to the TRAFAC class TrmE-Era-EngA-EngB-Septin-like GTPase superfamily. EngB GTPase family. It depends on Mg(2+) as a cofactor.

Functionally, necessary for normal cell division and for the maintenance of normal septation. This is Probable GTP-binding protein EngB from Chlorobaculum parvum (strain DSM 263 / NCIMB 8327) (Chlorobium vibrioforme subsp. thiosulfatophilum).